The sequence spans 84 residues: uncharacterized protein (84 aa).

A helical transmembrane segment spans residues 10-32 (AFSLAYYIIIHLLCLSYIYEIIH).

It localises to the membrane. This is an uncharacterized protein from Saccharomyces cerevisiae (strain ATCC 204508 / S288c) (Baker's yeast).